A 3712-amino-acid chain; its full sequence is Laminin subunit alpha (3712 aa).

The N-terminal stretch at 1–22 is a signal peptide; the sequence is MGHGVASIGALLVILAISYCQA. The Laminin N-terminal domain occupies 23-272; the sequence is ELTPPYFNLA…SIKDISIGGR (250 aa). Asn116 and Asn219 each carry an N-linked (GlcNAc...) asparagine glycan. Cystine bridges form between Cys273/Cys282, Cys275/Cys296, Cys298/Cys307, Cys310/Cys330, Cys333/Cys342, Cys335/Cys367, Cys370/Cys379, Cys382/Cys400, Cys403/Cys414, Cys405/Cys421, Cys423/Cys432, Cys435/Cys445, Cys448/Cys460, Cys450/Cys468, Cys470/Cys479, Cys482/Cys492, Cys495/Cys507, Cys497/Cys514, Cys516/Cys525, Cys528/Cys538, Cys541/Cys553, Cys543/Cys560, Cys562/Cys571, Cys574/Cys584, Cys587/Cys599, Cys589/Cys605, Cys607/Cys616, Cys619/Cys629, Cys632/Cys644, Cys634/Cys650, Cys652/Cys661, Cys664/Cys674, Cys677/Cys691, Cys679/Cys700, Cys702/Cys711, Cys714/Cys729, Cys732/Cys746, Cys734/Cys753, Cys755/Cys764, Cys767/Cys782, Cys785/Cys797, Cys787/Cys804, and Cys806/Cys815. 10 Laminin EGF-like domains span residues 273 to 332, 333 to 402, 403 to 447, 448 to 494, 495 to 540, 541 to 586, 587 to 631, 632 to 676, 677 to 731, and 732 to 784; these read CMCN…NCEP, CNCH…VCSP, CQCD…NCRE, CECN…ECKA, CECN…TCSY, CDCD…DCKP, CNCS…DCLP, CHCD…SCED, CNCD…GCEI, and CDCW…GCKD. An N-linked (GlcNAc...) asparagine glycan is attached at Asn395. N-linked (GlcNAc...) asparagine glycosylation is present at Asn453. A glycan (N-linked (GlcNAc...) asparagine) is linked at Asn508. N-linked (GlcNAc...) asparagine glycosylation is present at Asn588. A glycan (N-linked (GlcNAc...) asparagine) is linked at Asn722. The Laminin EGF-like 11; truncated domain occupies 785–815; sequence CSCDVGGSWQSVCDKISGQCKCHPRITGLAC. The segment at 816-1374 is domain IV''; sequence TQPLTTHFFP…TADYNSGALP (559 aa). N-linked (GlcNAc...) asparagine glycosylation is found at Asn897 and Asn1352. 16 cysteine pairs are disulfide-bonded: Cys1375-Cys1387, Cys1377-Cys1394, Cys1396-Cys1405, Cys1408-Cys1418, Cys1421-Cys1429, Cys1423-Cys1436, Cys1438-Cys1447, Cys1450-Cys1463, Cys1466-Cys1480, Cys1468-Cys1487, Cys1489-Cys1498, Cys1501-Cys1511, Cys1514-Cys1526, Cys1516-Cys1533, Cys1535-Cys1544, and Cys1547-Cys1562. Laminin EGF-like domains follow at residues 1375–1420, 1421–1465, 1466–1513, and 1514–1564; these read CNCD…DCKP, CKCP…GCEE, CACN…HCEQ, and CSCH…GCTT. An N-linked (GlcNAc...) asparagine glycan is attached at Asn1484. Residues 1565-1574 enclose the Laminin EGF-like 16; first part domain; sequence CFCFGKTSRC. N-linked (GlcNAc...) asparagine glycans are attached at residues Asn1583 and Asn1617. The Laminin IV type A domain maps to 1585 to 1775; that stretch reads SLLKHVSITT…GEYQFLAVER (191 aa). Residues 1776-1808 form the Laminin EGF-like 16; second part domain; it reads CSCPPGYSGHSCEDCAPGYYRDPSGPYGGYCIP. 26 cysteine pairs are disulfide-bonded: Cys1778–Cys1787, Cys1790–Cys1806, Cys1809–Cys1818, Cys1811–Cys1825, Cys1828–Cys1837, Cys1840–Cys1856, Cys1859–Cys1874, Cys1861–Cys1885, Cys1887–Cys1896, Cys1899–Cys1914, Cys1917–Cys1931, Cys1919–Cys1938, Cys1941–Cys1950, Cys1953–Cys1967, Cys1970–Cys1980, Cys1972–Cys1987, Cys1989–Cys1998, Cys2001–Cys2014, Cys2017–Cys2028, Cys2019–Cys2035, Cys2037–Cys2046, Cys2049–Cys2061, Cys2064–Cys2076, Cys2066–Cys2083, Cys2085–Cys2094, and Cys2097–Cys2109. Laminin EGF-like domains lie at 1809-1858, 1859-1916, 1917-1969, 1970-2016, 2017-2063, and 2064-2111; these read CECN…DCMI, CACP…VCKP, CECS…NCQS, CDCD…GCRA, CDCG…GCTP, and CNCN…GCQE. N-linked (GlcNAc...) asparagine glycosylation is present at Asn1847. A glycan (N-linked (GlcNAc...) asparagine) is linked at Asn1943. Asn2024 carries N-linked (GlcNAc...) asparagine glycosylation. The interval 2112–2671 is domain II and I; the sequence is CNNCHHALLD…EAARQLANSI (560 aa). The stretch at 2178-2249 forms a coiled coil; it reads KKANSELESD…LSKNLEAAAS (72 aa). 5 N-linked (GlcNAc...) asparagine glycosylation sites follow: Asn2196, Asn2215, Asn2267, Asn2301, and Asn2323. A coiled-coil region spans residues 2301–2321; it reads NKSLNALKNDIGEFSDHLEDL. Residues 2376 to 2450 are a coiled coil; sequence DLTLNQINQK…QYTDMTASAE (75 aa). Residues Asn2482, Asn2524, Asn2538, Asn2569, Asn2699, Asn2720, Asn2890, Asn2938, and Asn3010 are each glycosylated (N-linked (GlcNAc...) asparagine). A coiled-coil region spans residues 2541–2676; that stretch reads EHQLKDINKL…LANSIKVGVN (136 aa). Laminin G-like domains are found at residues 2672–2868, 2876–3048, and 3055–3223; these read KVGV…ERDV, VTGL…EEGC, and VVSY…INGC. A disulfide bridge connects residues Cys3022 and Cys3048. An N-linked (GlcNAc...) asparagine glycan is attached at Asn3070. Cys3196 and Cys3223 are oxidised to a cystine. A disordered region spans residues 3244–3297; the sequence is NEVESPWSNADTLPPLKPDIESTLPPTTPTTTTTTTTTTTSTTTTSTTTTTTTP. Residues 3265–3297 show a composition bias toward low complexity; sequence STLPPTTPTTTTTTTTTTTSTTTTSTTTTTTTP. Laminin G-like domains are found at residues 3349 to 3528 and 3534 to 3709; these read GYRF…VVPC and RGLF…QGYC. The N-linked (GlcNAc...) asparagine glycan is linked to Asn3491. A disulfide bond links Cys3505 and Cys3528. A glycan (N-linked (GlcNAc...) asparagine) is linked at Asn3612. An intrachain disulfide couples Cys3682 to Cys3709.

As to quaternary structure, laminin is a complex glycoprotein, consisting of three different polypeptide chains (alpha, beta, gamma), which are bound to each other by disulfide bonds into a cross-shaped molecule comprising one long and three short arms with globules at each end. Newly formed mesoderm and later prominently expressed in hemocytes, which also synthesize collagen IV. Expressed in muscles.

It is found in the secreted. The protein localises to the extracellular space. Its subcellular location is the extracellular matrix. It localises to the basement membrane. The protein resides in the synapse. It is found in the cell projection. The protein localises to the axon. Its subcellular location is the cytoplasmic vesicle. It localises to the secretory vesicle. The protein resides in the synaptic vesicle. In terms of biological role, binding to cells via a high affinity receptor, laminin is thought to mediate the attachment, migration and organization of cells into tissues during embryonic development by interacting with other extracellular matrix components. Activates presynaptic signaling involving integrin alpha-PS3/beta-nu and Fak to suppress neuromuscular junction (NMJ) growth during larval development and during low crawling activity, but not during higher-crawling conditions. Mediates, together with integrin alpha-PS3/beta-nu, glutamate receptor-modulated NMJ growth. The protein is Laminin subunit alpha (LanA) of Drosophila melanogaster (Fruit fly).